A 447-amino-acid polypeptide reads, in one-letter code: Cysteine--tRNA ligase (447 aa).

A Zn(2+)-binding site is contributed by C28. The 'HIGH' region signature appears at 30–40 (PTVYNYIHIGN). Positions 211, 236, and 240 each coordinate Zn(2+). The 'KMSKS' region signature appears at 268–272 (KMSKS). K271 lines the ATP pocket.

The protein belongs to the class-I aminoacyl-tRNA synthetase family. Monomer. The cofactor is Zn(2+).

Its subcellular location is the cytoplasm. The enzyme catalyses tRNA(Cys) + L-cysteine + ATP = L-cysteinyl-tRNA(Cys) + AMP + diphosphate. This chain is Cysteine--tRNA ligase, found in Streptococcus pyogenes serotype M28 (strain MGAS6180).